Here is a 239-residue protein sequence, read N- to C-terminus: mRNA turnover protein 4 homolog (239 aa).

Positions Phe215–Asp239 are disordered. A phosphoserine mark is found at Ser225, Ser229, and Ser233. The span at Ser229–Asp239 shows a compositional bias: acidic residues.

It belongs to the universal ribosomal protein uL10 family. As to quaternary structure, associates with the pre-60S ribosomal particle. Interacts with MINAS-60 (product of an alternative open reading frame of RBM10).

The protein localises to the nucleus. It is found in the nucleolus. Its subcellular location is the cytoplasm. Functionally, component of the ribosome assembly machinery. Nuclear paralog of the ribosomal protein P0, it binds pre-60S subunits at an early stage of assembly in the nucleolus, and is replaced by P0 in cytoplasmic pre-60S subunits and mature 80S ribosomes. This is mRNA turnover protein 4 homolog (MRTO4) from Homo sapiens (Human).